Reading from the N-terminus, the 680-residue chain is MALDGIRMPDGCYADGTWELSVHVTDLNRDVTLRVTGEVHIGGVMLKLVEKLDVKKDWSDHALWWEKKRTWLLKTHWTLDKYGIQADAKLQFTPQHKLLRLQLPNMKYVKVKVNFSDRVFKAVSDICKTFNIRHPEELSLLKKPRDPTKKKKKKLDDQSEDEALELEGPLITPGSGSIYSSPGLYSKTMTPTYDAHDGSPLSPTSAWFGDSALSEGNPGILAVSQPITSPEILAKMFKPQALLDKAKINQGWLDSSRSLMEQDVKENEALLLRFKYYSFFDLNPKYDAIRINQLYEQAKWAILLEEIECTEEEMMMFAALQYHINKLSIMTSENHLNNSDKEVDEVDAALSDLEITLEGGKTSTILGDITSIPELADYIKVFKPKKLTLKGYKQYWCTFKDTSISCYKSKEESSGTPAHQMNLRGCEVTPDVNISGQKFNIKLLIPVAEGMNEIWLRCDNEKQYAHWMAACRLASKGKTMADSSYNLEVQNILSFLKMQHLNPDPQLIPEQITTDITPECLVSPRYLKKYKNKQITARILEAHQNVAQMSLIEAKMRFIQAWQSLPEFGITHFIARFQGGKKEELIGIAYNRLIRMDASTGDAIKTWRFSNMKQWNVNWEIKMVTVEFADEVRLSFICTEVDCKVVHEFIGGYIFLSTRAKDQNESLDEEMFYKLTSGWV.

Positions 40-81 are interaction with membranes containing phosphatidylinositol phosphate; it reads HIGGVMLKLVEKLDVKKDWSDHALWWEKKRTWLLKTHWTLDK. A disordered region spans residues 141–165; the sequence is LKKPRDPTKKKKKKLDDQSEDEALE. Ser159, Ser181, Ser339, and Ser351 each carry phosphoserine. The region spanning 189–661 is the FERM domain; it reads MTPTYDAHDG…GYIFLSTRAK (473 aa). The region spanning 380–476 is the PH domain; that stretch reads KVFKPKKLTL…WMAACRLASK (97 aa). An a 1,2-diacyl-sn-glycero-3-phospho-(1D-myo-inositol-3,4,5-trisphosphate)-binding site is contributed by Lys383. The residue at position 666 (Ser666) is a Phosphoserine.

It belongs to the kindlin family. As to quaternary structure, interacts with ILK. Interacts with FBLIM1. Interacts with ITGB1 and ITGB3. Interacts with active, unphosphorylated CTNNB1. Identified in a complex with CTNNB1 and TCF7L2/TCF4. Interacts with ITGB1; the interaction is inhibited in presence of ITGB1BP1. As to expression, ubiquitous. Found in numerous tumor tissues.

The protein localises to the cytoplasm. It is found in the cell cortex. Its subcellular location is the cytoskeleton. It localises to the stress fiber. The protein resides in the cell junction. The protein localises to the focal adhesion. It is found in the membrane. Its subcellular location is the cell projection. It localises to the lamellipodium membrane. The protein resides in the nucleus. The protein localises to the myofibril. It is found in the sarcomere. Its subcellular location is the i band. It localises to the cell surface. Its function is as follows. Scaffolding protein that enhances integrin activation mediated by TLN1 and/or TLN2, but activates integrins only weakly by itself. Binds to membranes enriched in phosphoinositides. Enhances integrin-mediated cell adhesion onto the extracellular matrix and cell spreading; this requires both its ability to interact with integrins and with phospholipid membranes. Required for the assembly of focal adhesions. Participates in the connection between extracellular matrix adhesion sites and the actin cytoskeleton and also in the orchestration of actin assembly and cell shape modulation. Recruits FBLIM1 to focal adhesions. Plays a role in the TGFB1 and integrin signaling pathways. Stabilizes active CTNNB1 and plays a role in the regulation of transcription mediated by CTNNB1 and TCF7L2/TCF4 and in Wnt signaling. In Homo sapiens (Human), this protein is Fermitin family homolog 2 (FERMT2).